The chain runs to 299 residues: uncharacterized protein (299 aa).

Catalysis depends on charge relay system residues threonine 47 and tyrosine 109. Catalysis depends on tyrosine 138, which acts as the Proton donor. Catalysis depends on lysine 168, which acts as the Schiff-base intermediate with substrate.

This sequence belongs to the DapA family. In terms of assembly, homotetramer.

Its subcellular location is the cytoplasm. This is an uncharacterized protein from Chloroflexus aurantiacus (strain ATCC 29366 / DSM 635 / J-10-fl).